The chain runs to 670 residues: DNA ligase (670 aa).

Residues 33-37 (DAEYD), 82-83 (SL), and Glu-114 contribute to the NAD(+) site. The active-site N6-AMP-lysine intermediate is Lys-116. The NAD(+) site is built by Arg-137, Glu-173, Lys-291, and Lys-315. Positions 409, 412, 427, and 433 each coordinate Zn(2+). In terms of domain architecture, BRCT spans 592 to 670 (VQSDRLSGNT…ENALAELLSD (79 aa)).

The protein belongs to the NAD-dependent DNA ligase family. LigA subfamily. Mg(2+) serves as cofactor. It depends on Mn(2+) as a cofactor.

It carries out the reaction NAD(+) + (deoxyribonucleotide)n-3'-hydroxyl + 5'-phospho-(deoxyribonucleotide)m = (deoxyribonucleotide)n+m + AMP + beta-nicotinamide D-nucleotide.. Its function is as follows. DNA ligase that catalyzes the formation of phosphodiester linkages between 5'-phosphoryl and 3'-hydroxyl groups in double-stranded DNA using NAD as a coenzyme and as the energy source for the reaction. It is essential for DNA replication and repair of damaged DNA. The chain is DNA ligase from Idiomarina loihiensis (strain ATCC BAA-735 / DSM 15497 / L2-TR).